The chain runs to 137 residues: Protein Turandot X (137 aa).

Positions 1-24 are cleaved as a signal peptide; the sequence is MKVPVFQLSCLLCLIVCLLCSVKA.

This sequence belongs to the Turandot family.

The protein resides in the secreted. Functionally, a humoral factor that may play a role in stress tolerance. This is Protein Turandot X from Drosophila persimilis (Fruit fly).